The primary structure comprises 430 residues: Probable beta-1,3-galactosyl-O-glycosyl-glycoprotein beta-1,6-N-acetylglucosaminyltransferase 7 (430 aa).

Over 1 to 8 (MSQLRATK) the chain is Cytoplasmic. A helical; Signal-anchor for type II membrane protein transmembrane segment spans residues 9–25 (SGLVVRAVICIFIFLYL). The Extracellular segment spans residues 26–430 (RNPTPAESEE…QSHFNMRLNR (405 aa)). 4 cysteine pairs are disulfide-bonded: cysteine 53/cysteine 205, cysteine 139/cysteine 354, cysteine 160/cysteine 187, and cysteine 363/cysteine 395. Asparagine 87 is a glycosylation site (N-linked (GlcNAc...) asparagine). Residue asparagine 272 is glycosylated (N-linked (GlcNAc...) asparagine).

It belongs to the glycosyltransferase 14 family.

It localises to the golgi apparatus membrane. It participates in protein modification; protein glycosylation. Probable glycosyltransferase. This Homo sapiens (Human) protein is Probable beta-1,3-galactosyl-O-glycosyl-glycoprotein beta-1,6-N-acetylglucosaminyltransferase 7.